Consider the following 226-residue polypeptide: MGNCVKSPLRNLSRKMRQEETSYTVVQTSEEGLAASGELPGPLLMLAQNCAVMHNLLGPACIFLRKGFAENRQPDRSLRPEEIEELREAFREFDKDKDGYINCRDLGNCMRTMGYMPTEMELIELSQQINMNLGGHVDFDDFVELMGPKLLAETADMIGVKELRDAFREFDTNGDGEISTSELREAMRKLLGHQVGHRDIEEIIRDVDLNGDGRVDFEEFVRMMSR.

A lipid anchor (N-myristoyl glycine) is attached at Gly-2. Cys-4 carries S-palmitoyl cysteine lipidation. EF-hand domains are found at residues 81-116 (EEIE…MGYM), 135-152 (GHVD…KLLA), 158-193 (IGVK…LLGH), and 195-226 (VGHR…MMSR). Positions 94, 96, 98, 100, and 105 each coordinate Ca(2+). Ca(2+) is bound by residues Asp-171, Asn-173, Asp-175, and Glu-177. Ser-179 bears the Phosphoserine mark. 6 residues coordinate Ca(2+): Glu-182, Asp-208, Asn-210, Asp-212, Arg-214, and Glu-219.

As to quaternary structure, homodimer. Interacts (via C-terminus) with ITPR1, ITPR2 and ITPR3. This binding is calcium dependent and the interaction correlates with calcium concentration. An additional calcium-independent interaction with the N-terminus of ITPR1 results in a decreased InsP(3) binding to the receptor. Interacts with CACNA1A (via C-terminal CDB motif) in the pre- and postsynaptic membranes. Interacts with CACNA1C (via C-terminal C and IQ motifs). Interacts with CACNA1D. The binding to the C motif is calcium independent whereas the binding to IQ requires the presence of calcium and is mutually exclusive with calmodulin binding. Interacts with TRPC5 (via C-terminus). Interacts (via EF-hands 1 and 2) at microtubules with MAP1LC3B. Interacts with MYO1C. Interacts (via EF-hands 1 and 2) with NSMF (via the central NLS-containing motif region), the interaction occurs in a calcium dependent manner after synaptic NMDA receptor stimulation and prevents nuclear import of NSMF. Interacts with SPACA9. Phosphorylated. The phosphorylation regulates the activity.

It is found in the cytoplasm. Its subcellular location is the cytoskeleton. The protein localises to the perinuclear region. The protein resides in the cell membrane. It localises to the golgi apparatus. It is found in the postsynaptic density. In terms of biological role, modulates calcium-dependent activity of inositol 1,4,5-triphosphate receptors (ITPRs). Inhibits agonist-induced intracellular calcium signaling. Enhances inactivation and does not support calcium-dependent facilitation of voltage-dependent P/Q-type calcium channels. Causes calcium-dependent facilitation and inhibits inactivation of L-type calcium channels by binding to the same sites as calmodulin in the C-terminal domain of CACNA1C, but has an opposite effect on channel function. Suppresses the calcium-dependent inactivation of CACNA1D. Inhibits TRPC5 channels. Prevents NMDA receptor-induced cellular degeneration. Required for the normal transfer of light signals through the retina. The chain is Calcium-binding protein 1 (CABP1) from Bos taurus (Bovine).